The following is a 136-amino-acid chain: Transmembrane protein 203 (136 aa).

The interval 1-51 (MLFSLRELVQWLGFATFEIFVHLLALLVFSVLLALRVDGLTPGLSWWNVFV) is interaction with STING1. Transmembrane regions (helical) follow at residues 14–34 (FATFEIFVHLLALLVFSVLLA), 50–72 (FVPFFAADGLSTYFTTIVSVRLF), 81–101 (VLRLFWVLTVLSLKFVFEMLL), and 112–132 (LWFGLITSPVFILLQLLMIRA). The interval 52–136 (PFFAADGLST…LLMIRACRVN (85 aa)) is required for lysosomal localization of the STING-TMEM203 complex.

In terms of assembly, homodimer. Interacts with ATP2A2 and ITPR3. Interacts with STIM1 and STING1 (via transmembrane domain).

The protein localises to the endoplasmic reticulum membrane. Its subcellular location is the endoplasmic reticulum-Golgi intermediate compartment. The protein resides in the lysosome membrane. Its function is as follows. Involved in the regulation of cellular calcium homeotasis. Required for spermatogenesis. Acts as a regulator of STING-mediated inflammatory signaling in macrophages. Forms a complex with STING, promoting the activity of TBK1 kinase and the transcription factor IRF3, leading to activation of type I interferon expression. In Mus musculus (Mouse), this protein is Transmembrane protein 203 (Tmem203).